Reading from the N-terminus, the 105-residue chain is Urease subunit beta (105 aa).

It belongs to the urease beta subunit family. Heterotrimer of UreA (gamma), UreB (beta) and UreC (alpha) subunits. Three heterotrimers associate to form the active enzyme.

The protein localises to the cytoplasm. The catalysed reaction is urea + 2 H2O + H(+) = hydrogencarbonate + 2 NH4(+). It functions in the pathway nitrogen metabolism; urea degradation; CO(2) and NH(3) from urea (urease route): step 1/1. This Pseudomonas putida (strain GB-1) protein is Urease subunit beta.